A 221-amino-acid polypeptide reads, in one-letter code: Transcription factor HES-4 (221 aa).

Residues 1 to 22 (MAADTPGKPSASPMAGAPASAS) are compositionally biased toward low complexity. Residues 1–49 (MAADTPGKPSASPMAGAPASASRTPDKPRSAAEHRKSSKPVMEKRRRAR) are disordered. A compositionally biased stretch (basic and acidic residues) spans 24–35 (TPDKPRSAAEHR). The bHLH domain maps to 34-91 (HRKSSKPVMEKRRRARINESLAQLKTLILDALRKESSRHSKLEKADILEMTVRHLRSL). Residues 110–143 (YRAGFHECLAEVNRFLAGCEGVPADVRSRLLGHL) form the Orange domain. A disordered region spans residues 201 to 221 (LPAAPRAGPQGPGGPWRPWLR). The WRPW motif motif lies at 216-219 (WRPW).

Transcription repression requires formation of a complex with a corepressor protein of the Groucho/TLE family.

The protein localises to the nucleus. Functionally, transcriptional repressor. Binds DNA on N-box motifs: 5'-CACNAG-3'. The protein is Transcription factor HES-4 (HES4) of Homo sapiens (Human).